The primary structure comprises 155 residues: Transcriptional repressor NrdR (155 aa).

A compositionally biased stretch (polar residues) spans M1–S11. The interval M1–N22 is disordered. Residues C3–C34 fold into a zinc finger. An ATP-cone domain is found at L49 to S139.

This sequence belongs to the NrdR family. It depends on Zn(2+) as a cofactor.

In terms of biological role, negatively regulates transcription of bacterial ribonucleotide reductase nrd genes and operons by binding to NrdR-boxes. The chain is Transcriptional repressor NrdR from Lactobacillus helveticus (strain DPC 4571).